Reading from the N-terminus, the 227-residue chain is MQLVFIRHGLSEWNALNLFTGWRDVNLSEKGVEEAKEAGRKLKAAGFEFDIAFTSVLTRAIKTCNLVLEESDQLWVPQIKTWRLNERHYGGLQGLNKAEAAAEHGDEQVRIWRRSYDVLPPVLDPKDPNSAHNDRRYAHLPADVVPDCENLKVTLDRVLPFWEDQIAPAIKAGKRVLVAAHGNSLRALAKHIEGISDEDIMGLEIPTGQPLVYELDDNLKVLSKRYL.

Residues 7 to 14 (RHGLSEWN), 20 to 21 (TG), arginine 59, 86 to 89 (ERHY), lysine 97, 113 to 114 (RR), and 182 to 183 (GN) contribute to the substrate site. Histidine 8 functions as the Tele-phosphohistidine intermediate in the catalytic mechanism. Glutamate 86 functions as the Proton donor/acceptor in the catalytic mechanism.

The protein belongs to the phosphoglycerate mutase family. BPG-dependent PGAM subfamily. As to quaternary structure, homodimer.

It carries out the reaction (2R)-2-phosphoglycerate = (2R)-3-phosphoglycerate. It functions in the pathway carbohydrate degradation; glycolysis; pyruvate from D-glyceraldehyde 3-phosphate: step 3/5. Its function is as follows. Catalyzes the interconversion of 2-phosphoglycerate and 3-phosphoglycerate. This is 2,3-bisphosphoglycerate-dependent phosphoglycerate mutase from Actinobacillus succinogenes (strain ATCC 55618 / DSM 22257 / CCUG 43843 / 130Z).